The following is a 25-amino-acid chain: Alpha-amylase inhibitor (25 aa).

Monomer or homodimer. In terms of processing, may exist both in a glycosylated and in an unglycosylated form.

It localises to the secreted. Its function is as follows. Inhibits alpha-amylases but not trypsin. Is more effective against insect alpha-amylases than those of mammals. The chain is Alpha-amylase inhibitor from Secale cereale (Rye).